Consider the following 874-residue polypeptide: Alanine--tRNA ligase (874 aa).

Zn(2+)-binding residues include H563, H567, C665, and H669.

This sequence belongs to the class-II aminoacyl-tRNA synthetase family. The cofactor is Zn(2+).

It localises to the cytoplasm. The enzyme catalyses tRNA(Ala) + L-alanine + ATP = L-alanyl-tRNA(Ala) + AMP + diphosphate. Functionally, catalyzes the attachment of alanine to tRNA(Ala) in a two-step reaction: alanine is first activated by ATP to form Ala-AMP and then transferred to the acceptor end of tRNA(Ala). Also edits incorrectly charged Ser-tRNA(Ala) and Gly-tRNA(Ala) via its editing domain. The protein is Alanine--tRNA ligase of Actinobacillus succinogenes (strain ATCC 55618 / DSM 22257 / CCUG 43843 / 130Z).